Here is a 312-residue protein sequence, read N- to C-terminus: Light-independent protochlorophyllide reductase iron-sulfur ATP-binding protein (312 aa).

Residues 55–60 (GIGKST) and lysine 84 each bind ATP. Position 59 (serine 59) interacts with Mg(2+). [4Fe-4S] cluster is bound by residues cysteine 140 and cysteine 174. ATP-binding positions include 225-226 (NR) and 249-251 (PDL).

It belongs to the NifH/BchL/ChlL family. In terms of assembly, homodimer. Protochlorophyllide reductase is composed of three subunits; BchL, BchN and BchB. [4Fe-4S] cluster is required as a cofactor.

It catalyses the reaction chlorophyllide a + oxidized 2[4Fe-4S]-[ferredoxin] + 2 ADP + 2 phosphate = protochlorophyllide a + reduced 2[4Fe-4S]-[ferredoxin] + 2 ATP + 2 H2O. Its pathway is porphyrin-containing compound metabolism; bacteriochlorophyll biosynthesis (light-independent). In terms of biological role, component of the dark-operative protochlorophyllide reductase (DPOR) that uses Mg-ATP and reduced ferredoxin to reduce ring D of protochlorophyllide (Pchlide) to form chlorophyllide a (Chlide). This reaction is light-independent. The L component serves as a unique electron donor to the NB-component of the complex, and binds Mg-ATP. This chain is Light-independent protochlorophyllide reductase iron-sulfur ATP-binding protein, found in Rhodopseudomonas palustris (strain BisB18).